The sequence spans 177 residues: Putative acetyltransferase FG08082 (177 aa).

The N-acetyltransferase domain occupies 81-174 (EEWEQVGLVR…VSIAMVEGPG (94 aa)).

The protein belongs to the acetyltransferase family.

The protein operates within mycotoxin biosynthesis. In terms of biological role, putative acetyltransferase; part of the gene cluster that mediates the biosynthesis of butenolide, a mycotoxin that shows antibiotic activity but does not seem to play a major role in the spread of head blight in wheat. Butenolide is derived from glutamic acid via a 4-acetamido-2-butenoic acid intermediate. The predicted function of the NADH:flavin oxidoreductase FG08077, the cytochrome P450 monooxygenase FG08079, the decarboxylase FG08083, and the putative acetyltransferase FG08082 are consistent with this pathway, however, the respective activities of the butelonide biosynthesis cluster enzymes have still to be experimentally determined. The chain is Putative acetyltransferase FG08082 from Gibberella zeae (strain ATCC MYA-4620 / CBS 123657 / FGSC 9075 / NRRL 31084 / PH-1) (Wheat head blight fungus).